Reading from the N-terminus, the 464-residue chain is MATVNVNRSVTDIFYRYKMPRLQAKVEGKGNGIKTVLVNMAEVARAIGRPATYPTKYFGCELGAQTLFDHKNERFVVNGSHDVNKLQDLLDGFIRKFVLCPECDNPETNLTVSAKNQTISQSCKACGFHGLLKVNHKVNTFIVKNPPSLNPAAQGSSLTEGKRSRKQKQKNDNADGSMTNNSLANNSGGESDGGNGTNQASQTEAEISAAIPEKTAKDDDDEGWSVDVSKEAIRARLQDLTDGAKGMTISDDYDKTEKERIDIFYELVKDKRDKKQLDDVQTHKELVIEAERLDIINKAPLVLAELLFTENIIKDVQKNRPLLLRFTLNNPKAQRYLIGGVEQTVELHKGILMSKVAGIFKLFYDLDILDEAVILEWAQKVSKRHVSKNIAAEIHEKAMPFVLWLKNAEEESSESEEEEDDESEEDNYVSSAGQRGGQRVVQRGIPRAVAGDEDDEDDVNIDDI.

The residue at position 9 (Ser9) is a Phosphoserine. GTP is bound at residue 28–35; sequence GKGNGIKT. Disordered regions lie at residues 145-203 and 409-464; these read NPPS…ASQT and EEES…IDDI. The segment covering 174–184 has biased composition (polar residues); that stretch reads ADGSMTNNSLA. Positions 254-415 constitute a W2 domain; the sequence is DKTEKERIDI…KNAEEESSES (162 aa). Composition is skewed to acidic residues over residues 410–427 and 451–464; these read EESSESEEEEDDESEEDN and GDEDDEDDVNIDDI. Phosphoserine occurs at positions 412, 413, and 415.

This sequence belongs to the eIF-2-beta/eIF-5 family.

In terms of biological role, catalyzes the hydrolysis of GTP bound to the 40S ribosomal initiation complex (40S.mRNA.Met-tRNA[F].eIF-2.GTP) with the subsequent joining of a 60S ribosomal subunit resulting in the release of eIF-2 and the guanine nucleotide. The subsequent joining of a 60S ribosomal subunit results in the formation of a functional 80S initiation complex (80S.mRNA.Met-tRNA[F]). This chain is Eukaryotic translation initiation factor 5 (eIF5), found in Drosophila melanogaster (Fruit fly).